Consider the following 120-residue polypeptide: Large ribosomal subunit protein bL20 (120 aa).

The protein belongs to the bacterial ribosomal protein bL20 family.

In terms of biological role, binds directly to 23S ribosomal RNA and is necessary for the in vitro assembly process of the 50S ribosomal subunit. It is not involved in the protein synthesizing functions of that subunit. This chain is Large ribosomal subunit protein bL20, found in Ligilactobacillus salivarius (strain UCC118) (Lactobacillus salivarius).